We begin with the raw amino-acid sequence, 139 residues long: Peptide methionine sulfoxide reductase MsrB (139 aa).

Residues 8 to 130 (DQEWRQQLTD…NSASLRFHSA (123 aa)) form the MsrB domain. 4 residues coordinate Zn(2+): Cys-47, Cys-50, Cys-96, and Cys-99. Catalysis depends on Cys-119, which acts as the Nucleophile.

Belongs to the MsrB Met sulfoxide reductase family. Zn(2+) is required as a cofactor.

The catalysed reaction is L-methionyl-[protein] + [thioredoxin]-disulfide + H2O = L-methionyl-(R)-S-oxide-[protein] + [thioredoxin]-dithiol. The protein is Peptide methionine sulfoxide reductase MsrB of Hahella chejuensis (strain KCTC 2396).